Reading from the N-terminus, the 424-residue chain is Serine--tRNA ligase (424 aa).

An L-serine-binding site is contributed by Thr229–Glu231. Residues Arg260 to Glu262 and Val276 each bind ATP. Glu283 lines the L-serine pocket. Glu347 to Ser350 is an ATP binding site. Position 382 (Thr382) interacts with L-serine.

This sequence belongs to the class-II aminoacyl-tRNA synthetase family. Type-1 seryl-tRNA synthetase subfamily. As to quaternary structure, homodimer. The tRNA molecule binds across the dimer.

It is found in the cytoplasm. It catalyses the reaction tRNA(Ser) + L-serine + ATP = L-seryl-tRNA(Ser) + AMP + diphosphate + H(+). The enzyme catalyses tRNA(Sec) + L-serine + ATP = L-seryl-tRNA(Sec) + AMP + diphosphate + H(+). The protein operates within aminoacyl-tRNA biosynthesis; selenocysteinyl-tRNA(Sec) biosynthesis; L-seryl-tRNA(Sec) from L-serine and tRNA(Sec): step 1/1. Its function is as follows. Catalyzes the attachment of serine to tRNA(Ser). Is also able to aminoacylate tRNA(Sec) with serine, to form the misacylated tRNA L-seryl-tRNA(Sec), which will be further converted into selenocysteinyl-tRNA(Sec). The protein is Serine--tRNA ligase of Rubrobacter xylanophilus (strain DSM 9941 / JCM 11954 / NBRC 16129 / PRD-1).